The primary structure comprises 304 residues: Acetylglutamate kinase (304 aa).

Substrate contacts are provided by residues 64–65, Arg-86, and Asn-181; that span reads GG.

This sequence belongs to the acetylglutamate kinase family. ArgB subfamily.

The protein localises to the plastid. The protein resides in the chloroplast. The catalysed reaction is N-acetyl-L-glutamate + ATP = N-acetyl-L-glutamyl 5-phosphate + ADP. It functions in the pathway amino-acid biosynthesis; L-arginine biosynthesis; N(2)-acetyl-L-ornithine from L-glutamate: step 2/4. Functionally, catalyzes the ATP-dependent phosphorylation of N-acetyl-L-glutamate. In Cyanidium caldarium (Red alga), this protein is Acetylglutamate kinase.